The primary structure comprises 697 residues: Probable potassium transporter 4 (697 aa).

The Cytoplasmic portion of the chain corresponds to 1–29; the sequence is MSSSHTVTVSMDVEAGQKNKDKKGISQDL. The helical transmembrane segment at 30-50 threads the bilayer; it reads ILAYKTLGVVFGGLVTSPLYV. At 51–66 the chain is on the extracellular side; sequence YPSMNLTNPTEEDYLG. An N-linked (GlcNAc...) asparagine glycan is attached at Asn55. A helical membrane pass occupies residues 67-87; the sequence is IYSIMFWTLTLIGVVKYICIA. The Cytoplasmic portion of the chain corresponds to 88-152; sequence LNADDHGEGG…FIESSIIARR (65 aa). A helical membrane pass occupies residues 153–173; sequence LLLLTAILGMCMLIGDGILTP. Residues 174–189 lie on the Extracellular side of the membrane; the sequence is AISVLSAIDGLRGPFP. A helical membrane pass occupies residues 190 to 210; sequence SVSKPAVEGLSAAILVGLFLL. Residues 211-217 are Cytoplasmic-facing; sequence QKYGTSK. Residues 218–238 form a helical membrane-spanning segment; that stretch reads VSFMFSPIMAAWTFATPVIGV. Residues 239 to 271 lie on the Extracellular side of the membrane; that stretch reads YSIWRYYPGIFKAMSPHYIVRFFMTNQTRGWQL. Asn264 is a glycosylation site (N-linked (GlcNAc...) asparagine). The chain crosses the membrane as a helical span at residues 272-292; that stretch reads LGGTVLCITGAEAMFADLGHF. At 293–300 the chain is on the cytoplasmic side; the sequence is SKRSIQIA. The helical transmembrane segment at 301 to 321 threads the bilayer; it reads FMSSIYPSLVLTYAGQTAYLI. The Extracellular portion of the chain corresponds to 322-338; that stretch reads NNVDDFSDGFYKFVPRP. A helical membrane pass occupies residues 339 to 359; the sequence is VYWPMFIIATLAAIVASQSLI. The Cytoplasmic portion of the chain corresponds to 360-390; it reads SATFSVIKQSVVLDYFPRVKVVHTSKDKEGE. Residues 391 to 411 form a helical membrane-spanning segment; that stretch reads VYSPETNYMLMLLCVGVILGF. The Extracellular segment spans residues 412–422; that stretch reads GDGKDIGNAFG. Residues 423–443 traverse the membrane as a helical segment; it reads VVVILVMLITTILLTLVMLII. The Cytoplasmic segment spans residues 444-447; sequence WGTH. Residues 448-468 form a helical membrane-spanning segment; that stretch reads VVLVALYLVPFLLLEATYVSA. Residues 469-475 are Extracellular-facing; that stretch reads VCTKILR. A helical membrane pass occupies residues 476–496; sequence GGWVPFAVSVALAAVMFGWYY. At 497–697 the chain is on the cytoplasmic side; sequence GRQRKTEYEA…RVEIGMLYKA (201 aa).

It belongs to the HAK/KUP transporter (TC 2.A.72.3) family.

Its subcellular location is the membrane. High-affinity potassium transporter. The protein is Probable potassium transporter 4 (HAK4) of Oryza sativa subsp. japonica (Rice).